The following is a 318-amino-acid chain: Pantothenate kinase (318 aa).

96–103 (GSVAVGKS) lines the ATP pocket.

It belongs to the prokaryotic pantothenate kinase family.

It localises to the cytoplasm. It carries out the reaction (R)-pantothenate + ATP = (R)-4'-phosphopantothenate + ADP + H(+). It functions in the pathway cofactor biosynthesis; coenzyme A biosynthesis; CoA from (R)-pantothenate: step 1/5. This Nitrobacter hamburgensis (strain DSM 10229 / NCIMB 13809 / X14) protein is Pantothenate kinase.